The following is a 1025-amino-acid chain: Multidrug resistance protein MdtC (1025 aa).

The next 12 membrane-spanning stretches (helical) occupy residues 3 to 23 (FFALFIYRPVATILLSVAITL), 333 to 353 (EVEQTLIISVALVILVVFLFL), 360 to 380 (IIPAVAVPVSLIGTFAAMYLC), 387 to 407 (LSLMALTIATGFVVDDAIVVL), 431 to 451 (VGFTVLSMSLSLVAVFLPLLL), 463 to 483 (FAVTLSVAIGISLLVSLTLTP), 528 to 548 (LVGVVLLGTIALNIWLYISIP), 853 to 873 (VILIIAAIATVYIVLGILYES), 875 to 895 (VHPLTILSTLPSAGVGALLAL), 897 to 917 (LFNAPFSLIALIGIMLLIGIV), 953 to 973 (PIMMTTLAALFGALPLVLSGG), and 984 to 1004 (ITIVGGLVMSQLLTLYTTPVV).

This sequence belongs to the resistance-nodulation-cell division (RND) (TC 2.A.6) family. MdtC subfamily. Part of a tripartite efflux system composed of MdtA, MdtB and MdtC. MdtC forms a heteromultimer with MdtB.

It is found in the cell inner membrane. In terms of biological role, the MdtABC tripartite complex confers resistance against novobiocin and deoxycholate. This is Multidrug resistance protein MdtC from Escherichia coli O1:K1 / APEC.